Reading from the N-terminus, the 289-residue chain is Mitochondrial fission regulator 1-like (289 aa).

A Phosphothreonine modification is found at Thr27. Ser38, Ser100, Ser107, Ser221, Ser222, Ser235, Ser258, and Ser270 each carry phosphoserine.

The protein belongs to the MTFR1 family. Phosphorylated by AMPK. Upon stress, phosphorylation by AMPK is sufficient to induce mitochondrial fragmentation.

It is found in the mitochondrion outer membrane. Mitochondrial protein required for adaptation of miochondrial dynamics to metabolic changes. Regulates mitochondrial morphology at steady state and mediates AMPK-dependent stress-induced mitochondrial fragmentation via the control of OPA1 levels. This is Mitochondrial fission regulator 1-like (MTFR1L) from Bos taurus (Bovine).